The following is a 407-amino-acid chain: Probable tRNA sulfurtransferase (407 aa).

The region spanning 61–165 is the THUMP domain; it reads NEITYRLSKI…LDAIYMYEEV (105 aa). Residues 183 to 184, 208 to 209, Arg265, Gly287, and Gln296 contribute to the ATP site; these read ML and HF.

It belongs to the ThiI family.

It is found in the cytoplasm. The enzyme catalyses [ThiI sulfur-carrier protein]-S-sulfanyl-L-cysteine + a uridine in tRNA + 2 reduced [2Fe-2S]-[ferredoxin] + ATP + H(+) = [ThiI sulfur-carrier protein]-L-cysteine + a 4-thiouridine in tRNA + 2 oxidized [2Fe-2S]-[ferredoxin] + AMP + diphosphate. It carries out the reaction [ThiS sulfur-carrier protein]-C-terminal Gly-Gly-AMP + S-sulfanyl-L-cysteinyl-[cysteine desulfurase] + AH2 = [ThiS sulfur-carrier protein]-C-terminal-Gly-aminoethanethioate + L-cysteinyl-[cysteine desulfurase] + A + AMP + 2 H(+). It participates in cofactor biosynthesis; thiamine diphosphate biosynthesis. Functionally, catalyzes the ATP-dependent transfer of a sulfur to tRNA to produce 4-thiouridine in position 8 of tRNAs, which functions as a near-UV photosensor. Also catalyzes the transfer of sulfur to the sulfur carrier protein ThiS, forming ThiS-thiocarboxylate. This is a step in the synthesis of thiazole, in the thiamine biosynthesis pathway. The sulfur is donated as persulfide by IscS. The chain is Probable tRNA sulfurtransferase from Staphylococcus aureus (strain bovine RF122 / ET3-1).